The chain runs to 257 residues: Imidazole glycerol phosphate synthase subunit HisF (257 aa).

Active-site residues include Asp-11 and Asp-130.

It belongs to the HisA/HisF family. In terms of assembly, heterodimer of HisH and HisF.

It is found in the cytoplasm. It catalyses the reaction 5-[(5-phospho-1-deoxy-D-ribulos-1-ylimino)methylamino]-1-(5-phospho-beta-D-ribosyl)imidazole-4-carboxamide + L-glutamine = D-erythro-1-(imidazol-4-yl)glycerol 3-phosphate + 5-amino-1-(5-phospho-beta-D-ribosyl)imidazole-4-carboxamide + L-glutamate + H(+). It functions in the pathway amino-acid biosynthesis; L-histidine biosynthesis; L-histidine from 5-phospho-alpha-D-ribose 1-diphosphate: step 5/9. In terms of biological role, IGPS catalyzes the conversion of PRFAR and glutamine to IGP, AICAR and glutamate. The HisF subunit catalyzes the cyclization activity that produces IGP and AICAR from PRFAR using the ammonia provided by the HisH subunit. This chain is Imidazole glycerol phosphate synthase subunit HisF, found in Aeromonas salmonicida (strain A449).